The sequence spans 566 residues: Proline--tRNA ligase (566 aa).

The protein belongs to the class-II aminoacyl-tRNA synthetase family. ProS type 1 subfamily. Homodimer.

The protein resides in the cytoplasm. The catalysed reaction is tRNA(Pro) + L-proline + ATP = L-prolyl-tRNA(Pro) + AMP + diphosphate. Catalyzes the attachment of proline to tRNA(Pro) in a two-step reaction: proline is first activated by ATP to form Pro-AMP and then transferred to the acceptor end of tRNA(Pro). As ProRS can inadvertently accommodate and process non-cognate amino acids such as alanine and cysteine, to avoid such errors it has two additional distinct editing activities against alanine. One activity is designated as 'pretransfer' editing and involves the tRNA(Pro)-independent hydrolysis of activated Ala-AMP. The other activity is designated 'posttransfer' editing and involves deacylation of mischarged Ala-tRNA(Pro). The misacylated Cys-tRNA(Pro) is not edited by ProRS. The sequence is that of Proline--tRNA ligase from Campylobacter concisus (strain 13826).